A 71-amino-acid polypeptide reads, in one-letter code: uncharacterized protein (71 aa).

A helical membrane pass occupies residues 24–44 (FGGGGLSTAIYSIFAFFSIPL).

Its subcellular location is the membrane. This is an uncharacterized protein from Schizosaccharomyces pombe (strain 972 / ATCC 24843) (Fission yeast).